We begin with the raw amino-acid sequence, 285 residues long: Bifunctional protein FolD (285 aa).

NADP(+)-binding positions include 165-167 (GRS), Ser190, and Ile231.

It belongs to the tetrahydrofolate dehydrogenase/cyclohydrolase family. As to quaternary structure, homodimer.

It carries out the reaction (6R)-5,10-methylene-5,6,7,8-tetrahydrofolate + NADP(+) = (6R)-5,10-methenyltetrahydrofolate + NADPH. The enzyme catalyses (6R)-5,10-methenyltetrahydrofolate + H2O = (6R)-10-formyltetrahydrofolate + H(+). The protein operates within one-carbon metabolism; tetrahydrofolate interconversion. Catalyzes the oxidation of 5,10-methylenetetrahydrofolate to 5,10-methenyltetrahydrofolate and then the hydrolysis of 5,10-methenyltetrahydrofolate to 10-formyltetrahydrofolate. The sequence is that of Bifunctional protein FolD from Acetivibrio thermocellus (strain ATCC 27405 / DSM 1237 / JCM 9322 / NBRC 103400 / NCIMB 10682 / NRRL B-4536 / VPI 7372) (Clostridium thermocellum).